We begin with the raw amino-acid sequence, 222 residues long: Ras-related protein RabT1 (222 aa).

GTP is bound at residue 37–44; the sequence is GDNKTGKS. The Effector region signature appears at 59–66; that stretch reads VSSIGVDF. Residues 85-89 and 145-148 contribute to the GTP site; these read DVNSC and NKCD. At Cys-219 the chain carries Cysteine methyl ester. Cys-219 carries S-geranylgeranyl cysteine lipidation. A propeptide spans 220–222 (removed in mature form); sequence NIL.

It belongs to the small GTPase superfamily. Rab family.

The protein localises to the cell membrane. The protein is Ras-related protein RabT1 (rabT1) of Dictyostelium discoideum (Social amoeba).